The following is a 301-amino-acid chain: Ornithine carbamoyltransferase (301 aa).

Carbamoyl phosphate is bound by residues Arg-100 and 127–130 (HPCQ). L-ornithine contacts are provided by residues Asn-158, Asp-221, and 225–226 (SM). Residues Cys-260 and Arg-288 each contribute to the carbamoyl phosphate site.

This sequence belongs to the aspartate/ornithine carbamoyltransferase superfamily. OTCase family. In terms of assembly, the enzyme is present as a mixture of trimers and dodecamers, with the relative proportions of the two forms depending on the salt concentration. In addition, the trimeric fraction could reassociate into dodecamers when the salt concentration is increased. It appears that in vivo, the main fraction is in the dodecameric form.

It localises to the cytoplasm. The catalysed reaction is carbamoyl phosphate + L-ornithine = L-citrulline + phosphate + H(+). It participates in amino-acid biosynthesis; L-arginine biosynthesis; L-arginine from L-ornithine and carbamoyl phosphate: step 1/3. Inhibited by excess of arginine and by the bisubstrate delta-N-phosphonoacetyl-L-ornithine (PALO). In terms of biological role, reversibly catalyzes the transfer of the carbamoyl group from carbamoyl phosphate (CP) to the N(epsilon) atom of ornithine (ORN) to produce L-citrulline, which is a substrate for argininosuccinate synthetase, the enzyme involved in the final step in arginine biosynthesis. The protein is Ornithine carbamoyltransferase of Moritella abyssi.